Here is a 922-residue protein sequence, read N- to C-terminus: Chaperone protein ClpC, chloroplastic (922 aa).

The N-terminal 72 residues, 1-72, are a transit peptide targeting the chloroplast; the sequence is MARVLAQSLS…RPGLDFHSKV (72 aa). The Clp R domain maps to 92-234; that stretch reads FERFTEKAIK…RTQVIRMVGE (143 aa). 2 repeat regions span residues 95–160 and 170–234; these read FTEK…IGRG and FTPR…MVGE. The segment at 255–502 is i; sequence LEEYGTNLTK…RVRLQHAQLP (248 aa). 300–307 provides a ligand contact to ATP; it reads GEPGVGKT. Residues 509–544 form the UVR domain; it reads DKEVRKIVKEKEEYVRNQDFEKAGELRDKEMDLKAQ. The tract at residues 569–760 is II; it reads VTEVDIQHIV…LLIMTSNVGS (192 aa). An ATP-binding site is contributed by 643-650; it reads GPTGVGKS.

This sequence belongs to the ClpA/ClpB family. ClpC subfamily.

Its subcellular location is the plastid. The protein localises to the chloroplast. Molecular chaperone that may interact with a ClpP-like protease involved in degradation of denatured proteins in the chloroplast. This is Chaperone protein ClpC, chloroplastic from Pisum sativum (Garden pea).